We begin with the raw amino-acid sequence, 534 residues long: C-type lectin domain family 18 member A (534 aa).

Residues 47-88 are disordered; the sequence is GALPVAGKPEPMARSLASAPVSPWHHMDRGSTTPAKARSHSA. In terms of domain architecture, SCP spans 139-270; it reads LTAHNRLRSR…EAMEAFVCAY (132 aa). The region spanning 316-349 is the EGF-like domain; that stretch reads PRNPCRMSCRNLGHLNISTCRCHCQPGYTGRYCQ. Cystine bridges form between Cys-324/Cys-337, Cys-339/Cys-348, Cys-415/Cys-520, and Cys-496/Cys-512. In terms of domain architecture, C-type lectin spans 394–521; the sequence is IDGDCFMVSP…CKTRNRYICQ (128 aa).

The protein resides in the secreted. The chain is C-type lectin domain family 18 member A (Clec18a) from Mus musculus (Mouse).